Consider the following 170-residue polypeptide: MAVKIKLTRLGKIRNPQYRIAVADARTRRDGRSIEIIGRYHPKEDPSLIEINSERAQYWLSVGAQPTEPVLKLLKITGDWQKFKGLPGAEGRLKVAPPKPSKLELFNAALAEAEGGPTTEAAKPKKKAATSGAKKAAKAAEPEAAAPEAAEPEAAAPAEGGEQAESSTES.

A disordered region spans residues 114-170 (EGGPTTEAAKPKKKAATSGAKKAAKAAEPEAAAPEAAEPEAAAPAEGGEQAESSTES). The segment covering 142 to 170 (PEAAAPEAAEPEAAAPAEGGEQAESSTES) has biased composition (low complexity).

The protein belongs to the bacterial ribosomal protein bS16 family.

The sequence is that of Small ribosomal subunit protein bS16 from Mycobacterium avium (strain 104).